Consider the following 596-residue polypeptide: Estrogen receptor (596 aa).

The segment at 1 to 185 (MTMTLHTKAS…AMESAKETRY (185 aa)) is modulating (transactivation AF-1); mediates interaction with MACROD1. The O-linked (GlcNAc) serine glycan is linked to serine 10. Positions 36 to 48 (ERPLGEVYMDSSK) are required for interaction with NCOA1. The interaction with DDX5; self-association stretch occupies residues 36-175 (ERPLGEVYMD…LASTSDKGSM (140 aa)). A phosphoserine; by CDK2 mark is found at serine 104 and serine 106. Position 119 is a phosphoserine (serine 119). Positions 144–175 (EAGPPAYYRPNSDNRRQGGRERLASTSDKGSM) are disordered. The span at 155 to 166 (SDNRRQGGRERL) shows a compositional bias: basic and acidic residues. At serine 168 the chain carries Phosphoserine; by CK2. NR C4-type zinc fingers lie at residues 186 to 206 (CAVC…CEGC) and 222 to 246 (CPAT…LRKC). A DNA-binding region (nuclear receptor) is located at residues 186–251 (CAVCNDYASG…RLRKCYEVGM (66 aa)). Positions 186–311 (CAVCNDYASG…TKKNSPVLSL (126 aa)) are mediates interaction with DNTTIP2. The hinge stretch occupies residues 252–311 (MKGGIRKDRRGGRMLKHKRQRDDGEGRNEAVPSGDMRAANLWPSPIMIKHTKKNSPVLSL). A compositionally biased stretch (basic residues) spans 259-270 (DRRGGRMLKHKR). Positions 259–285 (DRRGGRMLKHKRQRDDGEGRNEAVPSG) are disordered. The residue at position 261 (arginine 261) is an Asymmetric dimethylarginine; by PRMT1. The interval 263-596 (GRMLKHKRQR…GEAENFPSTV (334 aa)) is interaction with AKAP13. The segment at 265–595 (MLKHKRQRDD…TGEAENFPST (331 aa)) is self-association. The 237-residue stretch at 312–548 (TADQMISALL…DLLLEMLDAH (237 aa)) folds into the NR LBD domain. Residues 312–595 (TADQMISALL…TGEAENFPST (284 aa)) are transactivation AF-2. 17beta-estradiol contacts are provided by glutamate 354 and arginine 395. The S-palmitoyl cysteine moiety is linked to residue cysteine 448. Histidine 525 is a 17beta-estradiol binding site. Tyrosine 538 is modified (phosphotyrosine; by Tyr-kinases). Threonine 572 is a glycosylation site (O-linked (GlcNAc) threonine).

The protein belongs to the nuclear hormone receptor family. NR3 subfamily. In terms of assembly, binds DNA as a homodimer. Can form a heterodimer with ESR2. Interacts with coactivator NCOA5. Interacts with PELP1, the interaction is enhanced by 17-beta-estradiol; the interaction increases ESR1 transcriptional activity. Interacts with NCOA7; the interaction is ligand-inducible. Interacts with AKAP13, CUEDC2, HEXIM1, KDM5A, MAP1S, SMARD1, and UBE1C. Interacts with MUC1; the interaction is stimulated by 7 beta-estradiol (E2) and enhances ESR1-mediated transcription. Interacts with DNTTIP2, and UIMC1. Interacts with KMT2D/MLL2. Interacts with ATAD2; the interaction is enhanced by estradiol. Interacts with KIF18A and LDB1. Interacts with RLIM (via its C-terminus). Interacts with MACROD1. Interacts with SH2D4A and PLCG. Interacts with SH2D4A; the interaction blocks binding to PLCG and inhibits estrogen-induced cell proliferation. Interacts with DYNLL1. Interacts with CCDC62; the interaction requires estradiol and appears to enhance the transcription of target genes. Interacts with NR2C1; the interaction prevents homodimerization of ESR1 and suppresses its transcriptional activity and cell growth. Interacts with DNAAF4. Interacts with PRMT2. Interacts with RBFOX2. Interacts with EP300; the interaction is estrogen-dependent and enhanced by CITED1. Interacts with CITED1; the interaction is estrogen-dependent. Interacts with FAM120B, FOXL2, PHB2 and SLC30A9. Interacts with coactivators NCOA3 and NCOA6. Interacts with STK3/MST2 only in the presence of SAV1 and vice-versa. Binds to CSNK1D. Interacts with NCOA2; NCOA2 can interact with ESR1 AF-1 and AF-2 domains simultaneously and mediate their transcriptional synergy. Interacts with DDX5. Interacts with NCOA1; the interaction seems to require a self-association of N-terminal and C-terminal regions. Interacts with ZNF366, DDX17, NFKB1, RELA, SP1 and SP3. Interacts with NRIP1. Interacts with GPER1; the interaction occurs in an estrogen-dependent manner. Interacts with CLOCK and the interaction is stimulated by estrogen. Interacts with TRIP4 (ufmylated); estrogen dependent. Interacts with LMTK3; the interaction phosphorylates ESR1 (in vitro) and protects it against proteasomal degradation. Interacts with CCAR2 (via N-terminus) in a ligand-independent manner. Interacts with ZFHX3. Interacts with SFR1 in a ligand-dependent and -independent manner. Interacts with DCAF13, LATS1 and DCAF1; regulates ESR1 ubiquitination and ubiquitin-mediated proteasomal degradation. Interacts (via DNA-binding domain) with POU4F2 (C-terminus); this interaction increases the estrogen receptor ESR1 transcriptional activity in a DNA- and ligand 17-beta-estradiol-independent manner. Interacts with ESRRB isoform 1. Interacts with UBE3A and WBP2. Interacts with GTF2B. Interacts with RBM39. In the absence of hormonal ligand, interacts with TACC1. Interacts with PI3KR1 or PI3KR2 and PTK2/FAK1. Interacts with SRC. Interacts with BAG1; the interaction is promoted in the absence of estradiol (17-beta-estradiol/E2). Interacts with and ubiquitinated by STUB1; the interaction is promoted in the absence of estradiol (17-beta-estradiol/E2). Interacts with NEDD8. Glycosylated; contains N-acetylglucosamine, probably O-linked. Post-translationally, ubiquitinated; regulated by LATS1 via DCAF1 it leads to ESR1 proteasomal degradation. Deubiquitinated by OTUB1. Ubiquitinated by STUB1/CHIP; in the CA1 hippocampal region following loss of endogenous circulating estradiol (17-beta-estradiol/E2). Ubiquitinated by UBR5, leading to its degradation: UBR5 specifically recognizes and binds ligand-bound ESR1 when it is not associated with coactivators (NCOAs). In presence of NCOAs, the UBR5-degron is not accessible, preventing its ubiquitination and degradation. In terms of processing, phosphorylated by cyclin A/CDK2 and CK1. Phosphorylation probably enhances transcriptional activity. Dephosphorylation at Ser-119 by PPP5C inhibits its transactivation activity. Phosphorylated by LMTK3 (in vitro). Palmitoylated at Cys-448 by ZDHHC7 and ZDHHC21. Palmitoylation is required for plasma membrane targeting and for rapid intracellular signaling via ERK and AKT kinases and cAMP generation, but not for signaling mediated by the nuclear hormone receptor. Post-translationally, dimethylated by PRMT1 at Arg-261. The methylation may favor cytoplasmic localization. Demethylated by JMJD6 at Arg-261.

The protein localises to the nucleus. It localises to the cytoplasm. It is found in the golgi apparatus. Its subcellular location is the cell membrane. Its function is as follows. Nuclear hormone receptor. The steroid hormones and their receptors are involved in the regulation of eukaryotic gene expression and affect cellular proliferation and differentiation in target tissues. Ligand-dependent nuclear transactivation involves either direct homodimer binding to a palindromic estrogen response element (ERE) sequence or association with other DNA-binding transcription factors, such as AP-1/c-Jun, c-Fos, ATF-2, Sp1 and Sp3, to mediate ERE-independent signaling. Ligand binding induces a conformational change allowing subsequent or combinatorial association with multiprotein coactivator complexes through LXXLL motifs of their respective components. Mutual transrepression occurs between the estrogen receptor (ER) and NF-kappa-B in a cell-type specific manner. Decreases NF-kappa-B DNA-binding activity and inhibits NF-kappa-B-mediated transcription from the IL6 promoter and displace RELA/p65 and associated coregulators from the promoter. Recruited to the NF-kappa-B response element of the CCL2 and IL8 promoters and can displace CREBBP. Present with NF-kappa-B components RELA/p65 and NFKB1/p50 on ERE sequences. Can also act synergistically with NF-kappa-B to activate transcription involving respective recruitment adjacent response elements; the function involves CREBBP. Can activate the transcriptional activity of TFF1. Also mediates membrane-initiated estrogen signaling involving various kinase cascades. Essential for MTA1-mediated transcriptional regulation of BRCA1 and BCAS3. Maintains neuronal survival in response to ischemic reperfusion injury when in the presence of circulating estradiol (17-beta-estradiol/E2). In Bos taurus (Bovine), this protein is Estrogen receptor (ESR1).